Consider the following 178-residue polypeptide: uncharacterized protein (178 aa).

Residues 1–16 are compositionally biased toward basic and acidic residues; sequence MNKRTSVDASKEDLHP. The interval 1-43 is disordered; sequence MNKRTSVDASKEDLHPADPQSGEGVPPNRKNTKTSPRGEGTAP.

This is an uncharacterized protein from Homo sapiens (Human).